The primary structure comprises 235 residues: Sugar fermentation stimulation protein homolog (235 aa).

This sequence belongs to the SfsA family.

The chain is Sugar fermentation stimulation protein homolog from Pseudomonas paraeruginosa (strain DSM 24068 / PA7) (Pseudomonas aeruginosa (strain PA7)).